The sequence spans 546 residues: DNA replication factor Cdt1 (546 aa).

Positions 1–11 (MEQRRVTDFFA) are enriched in basic and acidic residues. Residues 1-23 (MEQRRVTDFFARRRPGPPRIAPP) carry the PIP-box K+4 motif motif. Disordered stretches follow at residues 1-118 (MEQR…QDQD) and 143-165 (SAQDAGESCTPEAEGRPEEPCGE). Residues 28 to 45 (RTPSPARPALRAPASATS) are compositionally biased toward low complexity. Thr-29 is modified (phosphothreonine; by MAPK8). Ser-31 bears the Phosphoserine mark. The Cyclin-binding motif signature appears at 68 to 70 (RRL). Ser-93 carries the phosphoserine; by MAPK8 modification. Residues 150-190 (SCTPEAEGRPEEPCGEKAPAYQRFHALAQPGLPGLVLPYKY) form an interaction with GMNN region. A compositionally biased stretch (basic and acidic residues) spans 155–164 (AEGRPEEPCG). Ser-318 carries the post-translational modification Phosphoserine; by MAPK8. 2 positions are modified to phosphoserine: Ser-380 and Ser-394. The segment at 383 to 415 (ALRSAAPSSPGSPRPALPATPPATPPAASPSAL) is disordered. Over residues 392 to 410 (PGSPRPALPATPPATPPAA) the composition is skewed to pro residues. The segment at 451–546 (LERLPELARV…AHQTRAEEGL (96 aa)) is interaction with LRWD1.

This sequence belongs to the Cdt1 family. As to quaternary structure, interacts with GMNN; the interaction inhibits binding of the MCM complex to origins of replication. Interacts with MCM6. Interacts with CDC6; are mutually dependent on one another for loading MCM complexes onto chromatin. Interacts with PCNA. Interacts with LRWD1 during G1 phase and during mitosis. Interacts with NDC80 subunit of the NDC80 complex; leading to kinetochore localization. Interacts with GRWD1; origin binding of GRWD1 is dependent on CDT1. Interacts with KAT7. Interacts with ubiquitin-binding protein FAF1; the interaction is likely to promote CDT1 degradation. In terms of processing, two independent E3 ubiquitin ligase complexes, SCF(SKP2) and the DCX(DTL) complex, mediated CDT1 degradation in S phase. Ubiquitinated by the DCX(DTL) complex, in response to DNA damage, leading to its degradation. Ubiquitination by the DCX(DTL) complex is necessary to ensure proper cell cycle regulation and is PCNA-dependent: interacts with PCNA via its PIP-box, while the presence of the containing the 'K+4' motif in the PIP box, recruit the DCX(DTL) complex, leading to its degradation. Phosphorylation at Thr-29 by CDK2 targets CDT1 for ubiquitination by SCF(SKP2) E3 ubiquitin ligase and subsequent degradation. The interaction with GMNN protects it against ubiquitination. Deubiquitinated by USP37. Ubiquitinated and degraded by the SCF(FBXO31) complex during the G2 phase to prevent re-replication. Post-translationally, phosphorylation by cyclin A-dependent kinases at Thr-29 targets CDT1 for ubiquitynation by SCF(SKP2) E3 ubiquitin ligase and subsequent degradation. Phosphorylated at Thr-29 by MAPK8/JNK1, which blocks replication licensing in response to stress. Binding to GMNN is not affected by phosphorylation.

The protein resides in the nucleus. The protein localises to the chromosome. It localises to the centromere. It is found in the kinetochore. In terms of biological role, required for both DNA replication and mitosis. DNA replication licensing factor, required for pre-replication complex assembly. Cooperates with CDC6 and the origin recognition complex (ORC) during G1 phase of the cell cycle to promote the loading of the mini-chromosome maintenance (MCM) complex onto DNA to generate pre-replication complexes (pre-RC). Required also for mitosis by promoting stable kinetochore-microtubule attachments. Potential oncogene. The protein is DNA replication factor Cdt1 of Homo sapiens (Human).